Consider the following 416-residue polypeptide: Probable mannose-6-phosphate isomerase (416 aa).

Gln99, His101, Glu126, and His259 together coordinate Zn(2+). Arg278 is an active-site residue.

The protein belongs to the mannose-6-phosphate isomerase type 1 family. Requires Zn(2+) as cofactor.

Its subcellular location is the cytoplasm. It carries out the reaction D-mannose 6-phosphate = D-fructose 6-phosphate. Its pathway is nucleotide-sugar biosynthesis; GDP-alpha-D-mannose biosynthesis; alpha-D-mannose 1-phosphate from D-fructose 6-phosphate: step 1/2. Its function is as follows. Involved in the synthesis of the GDP-mannose and dolichol-phosphate-mannose required for a number of critical mannosyl transfer reactions. The sequence is that of Probable mannose-6-phosphate isomerase from Caenorhabditis elegans.